Consider the following 323-residue polypeptide: Melanocortin receptor 3 (323 aa).

Topologically, residues 1–37 are extracellular; that stretch reads MNSSCCPSSSYPTLPNLSQHPAAPSASNRSGSGFCEQ. Residues asparagine 2, asparagine 16, and asparagine 28 are each glycosylated (N-linked (GlcNAc...) asparagine). A helical membrane pass occupies residues 38–63; it reads VFIKPEVFLALGIVSLMENILVILAV. Over 64–75 the chain is Cytoplasmic; the sequence is VRNGNLHSPMYF. A helical transmembrane segment spans residues 76-100; the sequence is FLCSLAAADMLVSLSNSLETIMIVV. Residues 101–118 lie on the Extracellular side of the membrane; it reads INSDSLTLEDQFIQHMDN. The helical transmembrane segment at 119–140 threads the bilayer; the sequence is IFDSMICISLVASICNLLAIAV. Residues 141 to 160 are Cytoplasmic-facing; it reads DRYVTIFYALRYHSIMTVRK. Residues 161–181 traverse the membrane as a helical segment; it reads ALSLIVAIWVCCGICGVMFIV. The Extracellular portion of the chain corresponds to 182 to 186; that stretch reads YSESK. The chain crosses the membrane as a helical span at residues 187 to 210; sequence MVIVCLITMFFAMVLLMGTLYIHM. Over 211-245 the chain is Cytoplasmic; that stretch reads FLFARLHVQRIAALPPADGVAPQQHSCMKGAVTIT. A helical transmembrane segment spans residues 246-268; sequence ILLGVFIFCWAPFFLHLVLIITC. Topologically, residues 269–277 are extracellular; that stretch reads PTNPYCICY. The helical transmembrane segment at 278-301 threads the bilayer; that stretch reads TAHFNTYLVLIMCNSVIDPLIYAF. Topologically, residues 302 to 323 are cytoplasmic; the sequence is RSLELRNTFKEILCGCNGMNVG. Residue cysteine 315 is the site of S-palmitoyl cysteine attachment.

The protein belongs to the G-protein coupled receptor 1 family. Brain.

It localises to the cell membrane. In terms of biological role, receptor for MSH (alpha, beta and gamma) and ACTH. This receptor is mediated by G proteins which activate adenylate cyclase. Required for expression of anticipatory patterns of activity and wakefulness during periods of limited nutrient availability and for the normal regulation of circadian clock activity in the brain. The protein is Melanocortin receptor 3 (Mc3r) of Rattus norvegicus (Rat).